The chain runs to 179 residues: Large ribosomal subunit protein uL5 (179 aa).

It belongs to the universal ribosomal protein uL5 family. In terms of assembly, part of the 50S ribosomal subunit; part of the 5S rRNA/L5/L18/L25 subcomplex. Contacts the 5S rRNA and the P site tRNA. Forms a bridge to the 30S subunit in the 70S ribosome.

This is one of the proteins that bind and probably mediate the attachment of the 5S RNA into the large ribosomal subunit, where it forms part of the central protuberance. In the 70S ribosome it contacts protein S13 of the 30S subunit (bridge B1b), connecting the 2 subunits; this bridge is implicated in subunit movement. Contacts the P site tRNA; the 5S rRNA and some of its associated proteins might help stabilize positioning of ribosome-bound tRNAs. The protein is Large ribosomal subunit protein uL5 of Maridesulfovibrio salexigens (strain ATCC 14822 / DSM 2638 / NCIMB 8403 / VKM B-1763) (Desulfovibrio salexigens).